A 433-amino-acid polypeptide reads, in one-letter code: GTPase Obg (433 aa).

Residues 1–159 enclose the Obg domain; the sequence is MAITDYCECR…LNVSLEVKYL (159 aa). Residues 160-329 enclose the OBG-type G domain; the sequence is ANVGIVGFPN…LLDRVFELYN (170 aa). GTP-binding positions include 166-173, 191-195, 212-215, 282-285, and 310-312; these read GFPNSGKS, FTTLI, DIPG, NKID, and ISA. Mg(2+)-binding residues include serine 173 and threonine 193. The OCT domain occupies 355–433; that stretch reads TNENNNDPLN…FDGCEFVIND (79 aa).

The protein belongs to the TRAFAC class OBG-HflX-like GTPase superfamily. OBG GTPase family. In terms of assembly, monomer. Mg(2+) is required as a cofactor.

It is found in the cytoplasm. An essential GTPase which binds GTP, GDP and possibly (p)ppGpp with moderate affinity, with high nucleotide exchange rates and a fairly low GTP hydrolysis rate. Plays a role in control of the cell cycle, stress response, ribosome biogenesis and in those bacteria that undergo differentiation, in morphogenesis control. The sequence is that of GTPase Obg from Mycoplasma genitalium (strain ATCC 33530 / DSM 19775 / NCTC 10195 / G37) (Mycoplasmoides genitalium).